Reading from the N-terminus, the 107-residue chain is Nucleoid-associated protein A1C_06705 (107 aa).

Belongs to the YbaB/EbfC family. As to quaternary structure, homodimer.

The protein resides in the cytoplasm. The protein localises to the nucleoid. Its function is as follows. Binds to DNA and alters its conformation. May be involved in regulation of gene expression, nucleoid organization and DNA protection. In Rickettsia akari (strain Hartford), this protein is Nucleoid-associated protein A1C_06705.